The primary structure comprises 214 residues: Adenylate kinase (214 aa).

10–15 (GAGKGT) provides a ligand contact to ATP. Positions 30–59 (STGDMLRAAIKAGTELGLNAKAVMDAGQLV) are NMP. AMP contacts are provided by residues Thr31, Arg36, 57 to 59 (QLV), 85 to 88 (GFPR), and Gln92. Residues 122–159 (GRRVHSGSGRTYHVVFNPPKVEGKDDVTGEDLVIRADD) form an LID region. Residues Arg123 and 132 to 133 (TY) contribute to the ATP site. AMP is bound by residues Arg156 and Arg167. Gln200 serves as a coordination point for ATP.

The protein belongs to the adenylate kinase family. Monomer.

The protein localises to the cytoplasm. The catalysed reaction is AMP + ATP = 2 ADP. It functions in the pathway purine metabolism; AMP biosynthesis via salvage pathway; AMP from ADP: step 1/1. Its function is as follows. Catalyzes the reversible transfer of the terminal phosphate group between ATP and AMP. Plays an important role in cellular energy homeostasis and in adenine nucleotide metabolism. The chain is Adenylate kinase from Aeromonas salmonicida (strain A449).